A 196-amino-acid chain; its full sequence is Imidazoleglycerol-phosphate dehydratase (196 aa).

Belongs to the imidazoleglycerol-phosphate dehydratase family.

The protein resides in the cytoplasm. It carries out the reaction D-erythro-1-(imidazol-4-yl)glycerol 3-phosphate = 3-(imidazol-4-yl)-2-oxopropyl phosphate + H2O. It functions in the pathway amino-acid biosynthesis; L-histidine biosynthesis; L-histidine from 5-phospho-alpha-D-ribose 1-diphosphate: step 6/9. The polypeptide is Imidazoleglycerol-phosphate dehydratase (Clostridium botulinum (strain 657 / Type Ba4)).